The chain runs to 283 residues: Phosphatidylserine decarboxylase proenzyme (283 aa).

Active-site charge relay system; for autoendoproteolytic cleavage activity residues include aspartate 96, histidine 152, and serine 250. The active-site Schiff-base intermediate with substrate; via pyruvic acid; for decarboxylase activity is serine 250. Pyruvic acid (Ser); by autocatalysis is present on serine 250.

The protein belongs to the phosphatidylserine decarboxylase family. PSD-B subfamily. Prokaryotic type I sub-subfamily. In terms of assembly, heterodimer of a large membrane-associated beta subunit and a small pyruvoyl-containing alpha subunit. Pyruvate serves as cofactor. Is synthesized initially as an inactive proenzyme. Formation of the active enzyme involves a self-maturation process in which the active site pyruvoyl group is generated from an internal serine residue via an autocatalytic post-translational modification. Two non-identical subunits are generated from the proenzyme in this reaction, and the pyruvate is formed at the N-terminus of the alpha chain, which is derived from the carboxyl end of the proenzyme. The autoendoproteolytic cleavage occurs by a canonical serine protease mechanism, in which the side chain hydroxyl group of the serine supplies its oxygen atom to form the C-terminus of the beta chain, while the remainder of the serine residue undergoes an oxidative deamination to produce ammonia and the pyruvoyl prosthetic group on the alpha chain. During this reaction, the Ser that is part of the protease active site of the proenzyme becomes the pyruvoyl prosthetic group, which constitutes an essential element of the active site of the mature decarboxylase.

It localises to the cell membrane. The catalysed reaction is a 1,2-diacyl-sn-glycero-3-phospho-L-serine + H(+) = a 1,2-diacyl-sn-glycero-3-phosphoethanolamine + CO2. Its pathway is phospholipid metabolism; phosphatidylethanolamine biosynthesis; phosphatidylethanolamine from CDP-diacylglycerol: step 2/2. Functionally, catalyzes the formation of phosphatidylethanolamine (PtdEtn) from phosphatidylserine (PtdSer). The sequence is that of Phosphatidylserine decarboxylase proenzyme from Acinetobacter baumannii (strain SDF).